We begin with the raw amino-acid sequence, 480 residues long: Uridine 5'-monophosphate synthase (480 aa).

The residue at position 2 (A2) is an N-acetylalanine. Residues 2–214 (AAVGAALGPL…VFVAANHNGS (213 aa)) form an OPRTase region. At Y37 the chain carries Phosphotyrosine. Phosphoserine is present on S214. The tract at residues 215 to 220 (PLSIKE) is domain linker. An OMPdecase region spans residues 221 to 480 (APKELSFSAR…WEAYLSRLGV (260 aa)). An orotidine 5'-phosphate-binding site is contributed by S257. UMP contacts are provided by residues S257, D259, and 281 to 283 (KTH). Orotidine 5'-phosphate contacts are provided by residues K281, K314, D317, T321, S372, 430–432 (QQY), and 450–451 (GR). Catalysis depends on for OMPdecase activity residues K314 and D317. UMP-binding positions include D317, T321, S372, 430–432 (QQY), and 450–451 (GR).

In the N-terminal section; belongs to the purine/pyrimidine phosphoribosyltransferase family. The protein in the C-terminal section; belongs to the OMP decarboxylase family. In terms of assembly, homodimer; dimerization is required for enzymatic activity.

It carries out the reaction orotidine 5'-phosphate + diphosphate = orotate + 5-phospho-alpha-D-ribose 1-diphosphate. The catalysed reaction is orotidine 5'-phosphate + H(+) = UMP + CO2. It functions in the pathway pyrimidine metabolism; UMP biosynthesis via de novo pathway; UMP from orotate: step 1/2. It participates in pyrimidine metabolism; UMP biosynthesis via de novo pathway; UMP from orotate: step 2/2. Functionally, bifunctional enzyme catalyzing the last two steps of de novo pyrimidine biosynthesis, orotate phosphoribosyltransferase (OPRT), which converts orotate to orotidine-5'-monophosphate (OMP), and orotidine-5'-monophosphate decarboxylase (ODC), the terminal enzymatic reaction that decarboxylates OMP to uridine monophosphate (UMP). The polypeptide is Uridine 5'-monophosphate synthase (UMPS) (Pongo abelii (Sumatran orangutan)).